The chain runs to 95 residues: MSIDQSTAAKVAKLARIKVEQDALPALAAEFNTILGFIEQLNEVNVDGVEPMVSVTPMRLKRRTDGVSDGNQQAKVLSNAPDAREGFFAVPKVVE.

It belongs to the GatC family. Heterotrimer of A, B and C subunits.

The catalysed reaction is L-glutamyl-tRNA(Gln) + L-glutamine + ATP + H2O = L-glutaminyl-tRNA(Gln) + L-glutamate + ADP + phosphate + H(+). It catalyses the reaction L-aspartyl-tRNA(Asn) + L-glutamine + ATP + H2O = L-asparaginyl-tRNA(Asn) + L-glutamate + ADP + phosphate + 2 H(+). In terms of biological role, allows the formation of correctly charged Asn-tRNA(Asn) or Gln-tRNA(Gln) through the transamidation of misacylated Asp-tRNA(Asn) or Glu-tRNA(Gln) in organisms which lack either or both of asparaginyl-tRNA or glutaminyl-tRNA synthetases. The reaction takes place in the presence of glutamine and ATP through an activated phospho-Asp-tRNA(Asn) or phospho-Glu-tRNA(Gln). The sequence is that of Aspartyl/glutamyl-tRNA(Asn/Gln) amidotransferase subunit C from Ruegeria pomeroyi (strain ATCC 700808 / DSM 15171 / DSS-3) (Silicibacter pomeroyi).